The primary structure comprises 197 residues: FMN-dependent NADH:quinone oxidoreductase (197 aa).

FMN contacts are provided by residues S10 and 16 to 18 (SIS).

This sequence belongs to the azoreductase type 1 family. Homodimer. Requires FMN as cofactor.

It catalyses the reaction 2 a quinone + NADH + H(+) = 2 a 1,4-benzosemiquinone + NAD(+). The catalysed reaction is N,N-dimethyl-1,4-phenylenediamine + anthranilate + 2 NAD(+) = 2-(4-dimethylaminophenyl)diazenylbenzoate + 2 NADH + 2 H(+). Quinone reductase that provides resistance to thiol-specific stress caused by electrophilic quinones. Its function is as follows. Also exhibits azoreductase activity. Catalyzes the reductive cleavage of the azo bond in aromatic azo compounds to the corresponding amines. This Erythrobacter litoralis (strain HTCC2594) protein is FMN-dependent NADH:quinone oxidoreductase.